Consider the following 514-residue polypeptide: MDNRTLFEMRSIVKAFSGVRALDGVSLAVRPGECVGLCGENGAGKSTLMKVLSGVYPYGTYEGEILWDGAPLRAHSVRDSEHAGIVIIHQELMLVQQLSVAENIFLGNEITKPGGRMDYDAMHRKAEELLARLRLTDVNVAAPVMNYGSGHQQLFEIAKALAKNARLLILDEPTSSLSAKEIEVLLSIIEDLKRGGVACVYISHKLDEVKRVCDTITVIRDGKHIGTRPAAELDINGIITMMVGREMTSLFPKVEHTVGDVVLEARNVTCWDVTNPNRKRVDDVSFSVRRGEILGVAGLVGAGRTEMVSALFGAYPGRSSAQVLVEGKPVKVHSPAQAIAHGICLVPEDRKRHGIVPLMGVGENITLATLAQYARGLRVDKGAELMTVDREIKRLRIKTASPALSIASLSGGNQQKAVLTKMVLACPKVLILDEPTRGVDVGSKYDIYQMIADLAASGVAIIMVSSELPEILGMSDRVLVIGEGELRGDFANQGLTQERILAAAIHAEPRLRAA.

ABC transporter domains are found at residues 7-246 (FEMR…VGRE) and 263-508 (LEAR…IHAE). Residue 39–46 (GENGAGKS) participates in ATP binding.

The protein belongs to the ABC transporter superfamily. Xylose importer (TC 3.A.1.2.4) family. The complex is composed of two ATP-binding proteins (XylG), two transmembrane proteins (XylH) and a solute-binding protein (XylF).

Its subcellular location is the cell inner membrane. It carries out the reaction D-xylose(out) + ATP + H2O = D-xylose(in) + ADP + phosphate + H(+). Part of the ABC transporter complex XylFGH involved in xylose import. Responsible for energy coupling to the transport system. This is Xylose import ATP-binding protein XylG from Ralstonia nicotianae (strain ATCC BAA-1114 / GMI1000) (Ralstonia solanacearum).